A 270-amino-acid chain; its full sequence is MPFEFDVITLLPDMFDAVTQHGVTGRAHKSNLYRLHTWNPRNYAMNHYRTVDDSPYGGGPGMVMMAEPLDKAITDAKARQGEDGVSKTRVIYLSPQGKRLDHKKVLQISQLDGVVLLCGRYEGIDERLIEDQVDEEISIGDYVISGGELAAMVLIDAVVRQLPGALGDTRSAGQDSHTDHLLEYPHYTRPEVHKEKPVPRILLSGDHAKIERWRLQQSIGRTWLKRPDLLAEKYPEGLPDREKELLEEFKQLRYRVVANQLMDNTKEQEQ.

S-adenosyl-L-methionine contacts are provided by residues Gly119 and 139–144; that span reads IGDYVI.

This sequence belongs to the RNA methyltransferase TrmD family. As to quaternary structure, homodimer.

It localises to the cytoplasm. The catalysed reaction is guanosine(37) in tRNA + S-adenosyl-L-methionine = N(1)-methylguanosine(37) in tRNA + S-adenosyl-L-homocysteine + H(+). In terms of biological role, specifically methylates guanosine-37 in various tRNAs. This chain is tRNA (guanine-N(1)-)-methyltransferase, found in Nitrosomonas europaea (strain ATCC 19718 / CIP 103999 / KCTC 2705 / NBRC 14298).